Consider the following 260-residue polypeptide: Adenosylcobinamide-GDP ribazoletransferase (260 aa).

Transmembrane regions (helical) follow at residues 3–23, 36–56, 60–80, 108–128, 133–153, 180–200, 206–226, and 239–259; these read APLW…LPAW, FAPW…LVLI, WPTS…SGGL, VGAS…ASLL, LAPL…LWAM, ALPA…LMIV, MVLM…PELL, and GASV…LLPA.

Belongs to the CobS family. Mg(2+) serves as cofactor.

It is found in the cell inner membrane. The enzyme catalyses alpha-ribazole + adenosylcob(III)inamide-GDP = adenosylcob(III)alamin + GMP + H(+). The catalysed reaction is alpha-ribazole 5'-phosphate + adenosylcob(III)inamide-GDP = adenosylcob(III)alamin 5'-phosphate + GMP + H(+). Its pathway is cofactor biosynthesis; adenosylcobalamin biosynthesis; adenosylcobalamin from cob(II)yrinate a,c-diamide: step 7/7. Functionally, joins adenosylcobinamide-GDP and alpha-ribazole to generate adenosylcobalamin (Ado-cobalamin). Also synthesizes adenosylcobalamin 5'-phosphate from adenosylcobinamide-GDP and alpha-ribazole 5'-phosphate. The polypeptide is Adenosylcobinamide-GDP ribazoletransferase (Prochlorococcus marinus (strain MIT 9313)).